The chain runs to 213 residues: MTARNKRVRCKICGILELEHALAVSDAGGDAIGFVFYPPSPRYIDPAAASRIIAKLPPFITTVGLFVNHSAEQVREILNVVPLDVLQFHGNEDNDFCRSFSRPFYKAIGVGDETDVVAEAAKYPDAAALLFDTHDPQLRGGTGRVFDWSRIRHELGKPVILAGGLNPTNVAEAIRTVRPYAVDVSGGVEASKGVKSIELIQEFIGEVYREYEV.

The protein belongs to the TrpF family.

It catalyses the reaction N-(5-phospho-beta-D-ribosyl)anthranilate = 1-(2-carboxyphenylamino)-1-deoxy-D-ribulose 5-phosphate. The protein operates within amino-acid biosynthesis; L-tryptophan biosynthesis; L-tryptophan from chorismate: step 3/5. The chain is N-(5'-phosphoribosyl)anthranilate isomerase from Hahella chejuensis (strain KCTC 2396).